The chain runs to 203 residues: MEEGIVHKLDVFLIDENVSIKHVNLFDGDSYGCNIHLKTATCKYITFILVLEPDWENIVEAKPIHMRLNGKKIRVPLVAKTHTSLIYKVVIYVEEDALARFYSDVERSYTDVYPTFLVNTDTRRYYILDSGRTYTYIDPFISDGDKRRWLTREIEEAYDASTEEEEEDDTEEDMDTVHLYCLEEEDEEKIADTGNDNQKDAED.

Residues 182–203 (LEEEDEEKIADTGNDNQKDAED) are disordered.

Belongs to the poxviridae C7 protein family.

Plays a role for multiplication of the virus in different cell types. The chain is Probable host range protein 2-3 from Myxoma virus (strain Lausanne) (MYXV).